A 427-amino-acid polypeptide reads, in one-letter code: Tyrosine--tRNA ligase (427 aa).

An L-tyrosine-binding site is contributed by Tyr39. Residues 44–53 carry the 'HIGH' region motif; it reads PTSDSLHIGH. Residues Tyr178 and Gln182 each contribute to the L-tyrosine site. The short motif at 238–242 is the 'KMSKS' region element; it reads KFGKT. ATP is bound at residue Lys241. The S4 RNA-binding domain maps to 360–417; sequence ITLQQALVESKLVVSRAQARELISSNSITVNSKKQLKTEYIFCATDRLYNRFTLLRRG.

The protein belongs to the class-I aminoacyl-tRNA synthetase family. TyrS type 1 subfamily. Homodimer.

The protein resides in the cytoplasm. The enzyme catalyses tRNA(Tyr) + L-tyrosine + ATP = L-tyrosyl-tRNA(Tyr) + AMP + diphosphate + H(+). Catalyzes the attachment of tyrosine to tRNA(Tyr) in a two-step reaction: tyrosine is first activated by ATP to form Tyr-AMP and then transferred to the acceptor end of tRNA(Tyr). The protein is Tyrosine--tRNA ligase of Blochmanniella pennsylvanica (strain BPEN).